The following is a 491-amino-acid chain: Probable malate:quinone oxidoreductase (491 aa).

The protein belongs to the MQO family. FAD serves as cofactor.

The catalysed reaction is (S)-malate + a quinone = a quinol + oxaloacetate. It participates in carbohydrate metabolism; tricarboxylic acid cycle; oxaloacetate from (S)-malate (quinone route): step 1/1. This chain is Probable malate:quinone oxidoreductase, found in Actinobacillus pleuropneumoniae serotype 7 (strain AP76).